A 459-amino-acid chain; its full sequence is Cobyrinate a,c-diamide synthase (459 aa).

The 195-residue stretch at 252 to 446 folds into the GATase cobBQ-type domain; sequence TLALADDEAF…LHVHFAQRPE (195 aa). Cysteine 334 (nucleophile) is an active-site residue.

The protein belongs to the CobB/CbiA family. In terms of assembly, monomer. The cofactor is Mg(2+).

The enzyme catalyses cob(II)yrinate + 2 L-glutamine + 2 ATP + 2 H2O = cob(II)yrinate a,c diamide + 2 L-glutamate + 2 ADP + 2 phosphate + 2 H(+). It functions in the pathway cofactor biosynthesis; adenosylcobalamin biosynthesis; cob(II)yrinate a,c-diamide from sirohydrochlorin (anaerobic route): step 10/10. Catalyzes the ATP-dependent amidation of the two carboxylate groups at positions a and c of cobyrinate, using either L-glutamine or ammonia as the nitrogen source. Is able to use other nucleotide triphosphates as substrate, such as GTP or UTP, although less efficiently than ATP. This is Cobyrinate a,c-diamide synthase from Salmonella typhimurium (strain LT2 / SGSC1412 / ATCC 700720).